The primary structure comprises 82 residues: Acyl carrier protein (82 aa).

Residues 3–77 (SSIFDKVQNI…QAIEFIQHAI (75 aa)) form the Carrier domain. Residue Ser-37 is modified to O-(pantetheine 4'-phosphoryl)serine.

This sequence belongs to the acyl carrier protein (ACP) family. In terms of processing, 4'-phosphopantetheine is transferred from CoA to a specific serine of apo-ACP by AcpS. This modification is essential for activity because fatty acids are bound in thioester linkage to the sulfhydryl of the prosthetic group.

It localises to the plastid. The protein localises to the chloroplast. The protein operates within lipid metabolism; fatty acid biosynthesis. Carrier of the growing fatty acid chain in fatty acid biosynthesis. This chain is Acyl carrier protein, found in Gracilaria tenuistipitata var. liui (Red alga).